Consider the following 100-residue polypeptide: uncharacterized protein (100 aa).

Lysine 98 participates in a covalent cross-link: Isoglutamyl lysine isopeptide (Lys-Gln) (interchain with Q-Cter in protein Pup).

This is an uncharacterized protein from Mycobacterium tuberculosis (strain CDC 1551 / Oshkosh).